The chain runs to 254 residues: 3-deoxy-manno-octulosonate cytidylyltransferase (254 aa).

Belongs to the KdsB family.

It is found in the cytoplasm. The enzyme catalyses 3-deoxy-alpha-D-manno-oct-2-ulosonate + CTP = CMP-3-deoxy-beta-D-manno-octulosonate + diphosphate. The protein operates within nucleotide-sugar biosynthesis; CMP-3-deoxy-D-manno-octulosonate biosynthesis; CMP-3-deoxy-D-manno-octulosonate from 3-deoxy-D-manno-octulosonate and CTP: step 1/1. It participates in bacterial outer membrane biogenesis; lipopolysaccharide biosynthesis. Its function is as follows. Activates KDO (a required 8-carbon sugar) for incorporation into bacterial lipopolysaccharide in Gram-negative bacteria. In Tolumonas auensis (strain DSM 9187 / NBRC 110442 / TA 4), this protein is 3-deoxy-manno-octulosonate cytidylyltransferase.